The following is a 1072-amino-acid chain: MPKYKDINKVLVIGSGPIIIGQAAEFDYSGTQACKSLKEEGLQVVLVNNNPATIMTDTDIADIVYIENPTVCVVEKIIAKEKPDGILATLGGQTGLNLAVKLKEEGILDKYNVKLLGTSFESIKTAEDRKLFKRKMQEIGEPVAESVTVTNIEDALKFAKNYGYPLIIRPAYTLGGTGGGIAHNDEELISIVSLGLKKSMVGEVLVEKSLYGWKEIEFEVMRDADDNCITICSMENFDPVGVHTGDSIVVAPTQTLSDYEYQMLRSASIKIIKALKIEGGCNIQFALDPESHKYYVIEVNPRVSRSSALASKATGYPIAKVAAKIAIGLRLDEIKNPVTGKTTAFFEPALDYVVTKIPRWPFDKFYTTDRKIGTQMKATGEVMAIERSFEASLLKAVRSLEIKAYGLRLNNVKAMKTEEILKGISVPNDMRLFYIAEALRRDIDIDYINEVTKIDKWFLNKLLNIVNMEREIEKNELSEEILKKAKRMGFSDREIATIKGIEEEDVRALRKEYSIYPSYKMVDTCAAEFESVTQYIYSTYGEEDEVEIHEIPKVIVIGSGPIRIGQGIEFDYCSVKALWALRDAGIKSIIINNNPETVSTDFDTGDRLYFEPITLEDVLNIYEKEKPLGVMVMFGGQTAINLTEGLVKNGVKILGTSYESIDISEDREKFSKLLKELNINQPKGDYALTVEDAKDIALKLSFPLLVRPSYVIGGQSMEKVNTLQELIDYVKHATEISPGKPILIDKYIDGREVEIDAVSDGECVLIPGIMEHIERAGVHSGDSFSIYPARNLSEREINTIIEYTERISKALNVKGLINIQFAVKEGTVYVLEVNPRASRTVPIMSKATGVPMVKLAVEVALGKKLKELGYKSGLWPQTPYTVVKAPVFSMEKLTDAEVSLGPEMKSTGEIMGIDLSYEGALYKALEGAGLKIPKKGKILLSIAERDFQEVPSLVEKLQSLGYEIYATYRTGKYLSLMGIHVNVISLDNAIKLLKDGYFDAVINTPTKGKKPDNTGFKLRRTAVEYRIPLFTSMDTIKAALNAVAKVNVNGLSILSINEYEEIQKDNVKNLVL.

The tract at residues Met1–Glu401 is carboxyphosphate synthetic domain. ATP-binding residues include Arg129, Arg169, Gly175, Gly176, Lys208, Leu210, Glu215, Gly241, Val242, His243, Gln284, and Glu298. In terms of domain architecture, ATP-grasp 1 spans Lys133–Ile327. Residues Gln284, Glu298, and Asn300 each contribute to the Mg(2+) site. Mn(2+) contacts are provided by Gln284, Glu298, and Asn300. The oligomerization domain stretch occupies residues Ile402–Asp544. The interval Glu545–Gly929 is carbamoyl phosphate synthetic domain. One can recognise an ATP-grasp 2 domain in the interval Ser671–Leu861. The ATP site is built by Arg707, Lys746, Ile748, Glu752, Gly777, Val778, His779, Ser780, Gln820, and Glu832. Positions 820, 832, and 834 each coordinate Mg(2+). Residues Gln820, Glu832, and Asn834 each contribute to the Mn(2+) site. Residues Leu930–Leu1072 form the MGS-like domain. The tract at residues Leu930–Leu1072 is allosteric domain.

This sequence belongs to the CarB family. As to quaternary structure, composed of two chains; the small (or glutamine) chain promotes the hydrolysis of glutamine to ammonia, which is used by the large (or ammonia) chain to synthesize carbamoyl phosphate. Tetramer of heterodimers (alpha,beta)4. The cofactor is Mg(2+). Requires Mn(2+) as cofactor.

The catalysed reaction is hydrogencarbonate + L-glutamine + 2 ATP + H2O = carbamoyl phosphate + L-glutamate + 2 ADP + phosphate + 2 H(+). It carries out the reaction hydrogencarbonate + NH4(+) + 2 ATP = carbamoyl phosphate + 2 ADP + phosphate + 2 H(+). Its pathway is amino-acid biosynthesis; L-arginine biosynthesis; carbamoyl phosphate from bicarbonate: step 1/1. It functions in the pathway pyrimidine metabolism; UMP biosynthesis via de novo pathway; (S)-dihydroorotate from bicarbonate: step 1/3. Functionally, large subunit of the glutamine-dependent carbamoyl phosphate synthetase (CPSase). CPSase catalyzes the formation of carbamoyl phosphate from the ammonia moiety of glutamine, carbonate, and phosphate donated by ATP, constituting the first step of 2 biosynthetic pathways, one leading to arginine and/or urea and the other to pyrimidine nucleotides. The large subunit (synthetase) binds the substrates ammonia (free or transferred from glutamine from the small subunit), hydrogencarbonate and ATP and carries out an ATP-coupled ligase reaction, activating hydrogencarbonate by forming carboxy phosphate which reacts with ammonia to form carbamoyl phosphate. The protein is Carbamoyl phosphate synthase large chain of Thermoanaerobacter sp. (strain X514).